Here is a 284-residue protein sequence, read N- to C-terminus: MQQKTIKLGNLEIANDKPFTLFGGMNVLESRDMAMAVCEKYVEVTNKLGVPYVFKASFDKANRSSIHSYRGPGMEEGLKIFQELKDTFGVKIITDVHEIYQCKPVAEVVDIIQLPAFLARQTDLVEAMARTGAVINVKKPQFLSPGQMGNIVEKIEECGNDQVILCDRGTNFGYDNLVVDMLGFSVMKQVSKGCPVIFDVTHSLQCRDPFGAASSGRRAQVTELARAGLAVGIAGLFLEAHPDPNNAKCDGPSALPLSTLEAFVGQMKAIDDLVKSFPEIDTSK.

This sequence belongs to the KdsA family.

It is found in the cytoplasm. The enzyme catalyses D-arabinose 5-phosphate + phosphoenolpyruvate + H2O = 3-deoxy-alpha-D-manno-2-octulosonate-8-phosphate + phosphate. It functions in the pathway carbohydrate biosynthesis; 3-deoxy-D-manno-octulosonate biosynthesis; 3-deoxy-D-manno-octulosonate from D-ribulose 5-phosphate: step 2/3. It participates in bacterial outer membrane biogenesis; lipopolysaccharide biosynthesis. The chain is 2-dehydro-3-deoxyphosphooctonate aldolase (kdsA) from Mannheimia haemolytica (Pasteurella haemolytica).